The following is a 153-amino-acid chain: Transcriptional repressor NrdR (153 aa).

Residues 3–33 fold into a zinc finger; it reads CPYCNYKESKVIDSRHTDLKSIRRRRECESC. One can recognise an ATP-cone domain in the interval 48 to 138; sequence LMVIKKDNSR…VYRQFKDINT (91 aa).

Belongs to the NrdR family. Requires Zn(2+) as cofactor.

In terms of biological role, negatively regulates transcription of bacterial ribonucleotide reductase nrd genes and operons by binding to NrdR-boxes. This is Transcriptional repressor NrdR from Clostridioides difficile (strain 630) (Peptoclostridium difficile).